Consider the following 277-residue polypeptide: Large ribosomal subunit protein uL2c (277 aa).

Disordered regions lie at residues 36-56 (NKHSKKGRNNRGIITSRHRGG) and 225-259 (MNSVDHPHGGGEGKTSIGRKKPLTPWGRTALGSKS).

This sequence belongs to the universal ribosomal protein uL2 family. Part of the 50S ribosomal subunit.

It is found in the plastid. It localises to the chloroplast. The sequence is that of Large ribosomal subunit protein uL2c (rpl2) from Psilotum nudum (Whisk fern).